The primary structure comprises 653 residues: Multidomain regulatory protein MT1410 (653 aa).

The PAC domain maps to Ser-86–Ala-142. The region spanning Asp-177–Arg-396 is the PPM-type phosphatase domain. Mn(2+)-binding residues include Asp-211, Val-212, Asp-328, and Asp-387. Residues Arg-397–Gln-544 form an anti-sigma factor kinase region region. One can recognise an STAS domain in the interval Ile-546 to Glu-653. Ser-600 is modified (phosphoserine).

The cofactor is Mg(2+). Mn(2+) is required as a cofactor. Autophosphorylated.

It carries out the reaction O-phospho-L-seryl-[protein] + H2O = L-seryl-[protein] + phosphate. The catalysed reaction is O-phospho-L-threonyl-[protein] + H2O = L-threonyl-[protein] + phosphate. The enzyme catalyses L-seryl-[protein] + ATP = O-phospho-L-seryl-[protein] + ADP + H(+). It catalyses the reaction L-threonyl-[protein] + ATP = O-phospho-L-threonyl-[protein] + ADP + H(+). Primarily acts as an independent SigF regulator that is sensitive to the osmosensory signal, mediating the cross talk of PknD with the SigF regulon. Possesses both phosphatase and kinase activities. The kinase domain functions as a classic anti-sigma factor-like kinase to phosphorylate the anti-anti-sigma factor domain at the canonical regulatory site, and the phosphatase domain antagonizes this activity. This Mycobacterium tuberculosis (strain CDC 1551 / Oshkosh) protein is Multidomain regulatory protein MT1410.